Consider the following 262-residue polypeptide: MYHVNRIYPKKELSQCFISSSHITDKIVNYAGNISDYSIIEIGPGLGTMTYSILNKNPKRLISIEKDSRLMPIHKKIVDEFNGKYEFILSDALNIDLRTIIEPPVKIIANLPYHIATPLLMKWINYIDFFTSFTLMFQKEVADRIVAQPNNKNYSILSVLIQLLSNVYKMEDFGPEIFSPQPKVMSSVINIIVLPKPRFNVNHNKLSQVLKVTFGERRKMIRSTLKKLINNTDEILQSLNINNNLRPENLSIEQFCKIANSI.

S-adenosyl-L-methionine is bound by residues I18, G43, E65, D91, and N110.

It belongs to the class I-like SAM-binding methyltransferase superfamily. rRNA adenine N(6)-methyltransferase family. RsmA subfamily.

Its subcellular location is the cytoplasm. The catalysed reaction is adenosine(1518)/adenosine(1519) in 16S rRNA + 4 S-adenosyl-L-methionine = N(6)-dimethyladenosine(1518)/N(6)-dimethyladenosine(1519) in 16S rRNA + 4 S-adenosyl-L-homocysteine + 4 H(+). Specifically dimethylates two adjacent adenosines (A1518 and A1519) in the loop of a conserved hairpin near the 3'-end of 16S rRNA in the 30S particle. May play a critical role in biogenesis of 30S subunits. This Ehrlichia canis (strain Jake) protein is Ribosomal RNA small subunit methyltransferase A.